The chain runs to 352 residues: ATPase GET3 (352 aa).

Position 26–33 (26–33 (KGGVGKTT)) interacts with ATP. D57 is a catalytic residue. E243 and N270 together coordinate ATP. Residues C283 and C286 each coordinate Zn(2+).

It belongs to the arsA ATPase family. As to quaternary structure, homodimer. Component of the Golgi to ER traffic (GET) complex, which is composed of GET1, GET2 and GET3. Within the complex, GET1 and GET2 form a heterotetramer which is stabilized by phosphatidylinositol binding and which binds to the GET3 homodimer. Interacts with the chloride channel protein GEF1.

The protein localises to the cytoplasm. The protein resides in the endoplasmic reticulum. It is found in the golgi apparatus. In terms of biological role, ATPase required for the post-translational delivery of tail-anchored (TA) proteins to the endoplasmic reticulum. Recognizes and selectively binds the transmembrane domain of TA proteins in the cytosol. This complex then targets to the endoplasmic reticulum by membrane-bound receptors GET1 and GET2, where the tail-anchored protein is released for insertion. This process is regulated by ATP binding and hydrolysis. ATP binding drives the homodimer towards the closed dimer state, facilitating recognition of newly synthesized TA membrane proteins. ATP hydrolysis is required for insertion. Subsequently, the homodimer reverts towards the open dimer state, lowering its affinity for the GET1-GET2 receptor, and returning it to the cytosol to initiate a new round of targeting. Cooperates with the HDEL receptor ERD2 to mediate the ATP-dependent retrieval of resident ER proteins that contain a C-terminal H-D-E-L retention signal from the Golgi to the ER. Involved in low-level resistance to the oxyanions arsenite and arsenate, and in heat tolerance. The sequence is that of ATPase GET3 from Vanderwaltozyma polyspora (strain ATCC 22028 / DSM 70294 / BCRC 21397 / CBS 2163 / NBRC 10782 / NRRL Y-8283 / UCD 57-17) (Kluyveromyces polysporus).